Consider the following 424-residue polypeptide: tRNA (guanine-N(7)-)-methyltransferase non-catalytic subunit wuho (424 aa).

Positions L42–G92 are disordered. The segment covering T46–Q68 has biased composition (low complexity). 4 WD repeats span residues A96–L137, G184–S223, G227–Q265, and A324–S364.

It belongs to the WD repeat TRM82 family. As to quaternary structure, forms a heterodimer with the catalytic subunit Mettl1. Interacts with mei-P26 and weakly interacts with bgcn; required for the function or formation of the mei-P26-bgcn-bam-sxl complex. Interacts with nanos; may be involved in mei-P26-dependent derepression of the BMP signaling pathway. Interacts with Myc; the interaction may be mediated by mei-P26 and may be involved in the regulation of ribosome biogenesis. As to expression, in testis, it is present at high level in hub cells, a niche for germline stem cells of testis. Ubiquitously expressed in all testicular cells throughout spermatogenesis. Ubiquitously expressed in all germline and somatic cells of the ovary.

It localises to the nucleus. The protein resides in the cytoplasm. It participates in tRNA modification; N(7)-methylguanine-tRNA biosynthesis. Functionally, required for the Mettl1-dependent formation of N(7)-methylguanine at position 46 (m7G46) in tRNA. In the Mettl1-wuho methyltransferase complex, it is required to stabilize and induce conformational changes of the catalytic subunit. Required for binding of nanos mRNA and repression of translation by the mei-P26-bgcn-bam-sxl complex. May cooperate with mei-P26 and nanos to derepress the BMP signaling pathway. May cooperate with mei-P26 to suppress expression of a subset of microRNAs. May cooperate with mei-P26 to regulate bam expression levels in germline cells during gametogenesis. Required to promote mitosis to meiosis transition during gametogenesis. May regulate germline cell division in part by regulating ribosome biogenesis. This Drosophila melanogaster (Fruit fly) protein is tRNA (guanine-N(7)-)-methyltransferase non-catalytic subunit wuho.